We begin with the raw amino-acid sequence, 176 residues long: Vitamin K epoxide reductase complex subunit 1-like protein 1 (176 aa).

The Cytoplasmic portion of the chain corresponds to 1–13 (MAAPVLLRVSVPR). A helical membrane pass occupies residues 14 to 36 (WERVARYAVCAAGILLSIYAYHV). Topologically, residues 37–87 (EREKERDPEHRALCDLGPWVKCSAALASRWGRGFGLLGSIFGKDGVLNQPN) are lumenal. A disulfide bridge links Cys-50 with Cys-58. Asn-87 lines the (S)-warfarin pocket. Residues 88 to 102 (SVFGLIFYILQLLLG) form a helical membrane-spanning segment. Over 103-107 (MTASA) the chain is Cytoplasmic. Residues 108–135 (VAALVLMTSSIVSVVGSLYLAYILYFVL) form a helical membrane-spanning segment. Topologically, residues 136-138 (KEF) are lumenal. Cysteines 139 and 142 form a disulfide. Residues 139–160 (CIICVTTYVLNFLLLIINYKRL) form a helical membrane-spanning segment. Phylloquinone is bound by residues Cys-142 and Tyr-146. Position 146 (Tyr-146) interacts with (S)-warfarin. Residues 161–176 (VYLNEAWKRQLQPKED) lie on the Cytoplasmic side of the membrane.

It belongs to the VKOR family. Detected in testis and lung.

It localises to the endoplasmic reticulum membrane. The catalysed reaction is phylloquinone + [protein]-disulfide + H2O = 2,3-epoxyphylloquinone + [protein]-dithiol. It catalyses the reaction phylloquinol + [protein]-disulfide = phylloquinone + [protein]-dithiol. With respect to regulation, inhibited by warfarin (coumadin). Warfarin locks VKORC1 in both redox states into the closed conformation. Involved in vitamin K metabolism. Can reduce inactive vitamin K 2,3-epoxide to active vitamin K, and may contribute to vitamin K-mediated protection against oxidative stress. Plays a role in vitamin K-dependent gamma-carboxylation of Glu residues in target proteins. This chain is Vitamin K epoxide reductase complex subunit 1-like protein 1 (Vkorc1l1), found in Mus musculus (Mouse).